An 89-amino-acid chain; its full sequence is Small ribosomal subunit protein uS15 (89 aa).

Belongs to the universal ribosomal protein uS15 family. In terms of assembly, part of the 30S ribosomal subunit. Forms a bridge to the 50S subunit in the 70S ribosome, contacting the 23S rRNA.

One of the primary rRNA binding proteins, it binds directly to 16S rRNA where it helps nucleate assembly of the platform of the 30S subunit by binding and bridging several RNA helices of the 16S rRNA. In terms of biological role, forms an intersubunit bridge (bridge B4) with the 23S rRNA of the 50S subunit in the ribosome. The sequence is that of Small ribosomal subunit protein uS15 from Crocosphaera subtropica (strain ATCC 51142 / BH68) (Cyanothece sp. (strain ATCC 51142)).